The following is a 241-amino-acid chain: Methylthioribulose-1-phosphate dehydratase (241 aa).

Cys100 contacts substrate. Positions 117 and 119 each coordinate Zn(2+). Residue Glu146 is the Proton donor/acceptor of the active site. Residue His202 participates in Zn(2+) binding.

It belongs to the aldolase class II family. MtnB subfamily. Requires Zn(2+) as cofactor.

It localises to the cytoplasm. The enzyme catalyses 5-(methylsulfanyl)-D-ribulose 1-phosphate = 5-methylsulfanyl-2,3-dioxopentyl phosphate + H2O. It participates in amino-acid biosynthesis; L-methionine biosynthesis via salvage pathway; L-methionine from S-methyl-5-thio-alpha-D-ribose 1-phosphate: step 2/6. Functionally, catalyzes the dehydration of methylthioribulose-1-phosphate (MTRu-1-P) into 2,3-diketo-5-methylthiopentyl-1-phosphate (DK-MTP-1-P). This chain is Methylthioribulose-1-phosphate dehydratase, found in Ajellomyces dermatitidis (strain ER-3 / ATCC MYA-2586) (Blastomyces dermatitidis).